The sequence spans 138 residues: Large ribosomal subunit protein uL16 (138 aa).

Belongs to the universal ribosomal protein uL16 family. As to quaternary structure, part of the 50S ribosomal subunit.

In terms of biological role, binds 23S rRNA and is also seen to make contacts with the A and possibly P site tRNAs. The polypeptide is Large ribosomal subunit protein uL16 (Chlamydia trachomatis serovar D (strain ATCC VR-885 / DSM 19411 / UW-3/Cx)).